The chain runs to 86 residues: Large ribosomal subunit protein bL31B (86 aa).

This sequence belongs to the bacterial ribosomal protein bL31 family. Type B subfamily. In terms of assembly, part of the 50S ribosomal subunit.

The protein is Large ribosomal subunit protein bL31B of Streptococcus equi subsp. equi (strain 4047).